Consider the following 321-residue polypeptide: tRNA pseudouridine synthase B (321 aa).

The Nucleophile role is filled by Asp-47.

Belongs to the pseudouridine synthase TruB family. Type 1 subfamily.

It carries out the reaction uridine(55) in tRNA = pseudouridine(55) in tRNA. Its function is as follows. Responsible for synthesis of pseudouridine from uracil-55 in the psi GC loop of transfer RNAs. This is tRNA pseudouridine synthase B from Shewanella baltica (strain OS185).